A 216-amino-acid chain; its full sequence is MNIQLSPLEARVIGCLIEKEVTTPDHYPLTLNSLTTACNQKSNREPVLNLSEAEVQDTVEGLIARRLVSDESSFNSRTSKYQHRFCNTEFGDLKLNQQELGLICCLLLRGAQTPGELRTRTNRLCTFTDVKETEAVLERLANRDSGALVVKLPREPGKRESRYHHLFCGEVDMAAFATSSDNEANASSQYAELEQEVAALREEVAELRALIEQHLS.

This sequence belongs to the UPF0502 family.

This is UPF0502 protein VCM66_A0698 from Vibrio cholerae serotype O1 (strain M66-2).